The following is an 858-amino-acid chain: Neural cell adhesion molecule 1 (858 aa).

Positions 1–19 are cleaved as a signal peptide; it reads MLRTKDLIWTLFFLGTAVS. Ig-like C2-type domains are found at residues 20-111, 116-205, 212-302, 309-414, and 417-502; these read LQVD…ATVN, QKLM…KDIQ, PTVQ…ASIH, PKIT…LEVQ, and PKLQ…ESLE. Residues 20 to 721 lie on the Extracellular side of the membrane; the sequence is LQVDIVPSQG…NGSPTAGLST (702 aa). 2 cysteine pairs are disulfide-bonded: C41-C96 and C139-C189. Heparin contacts are provided by residues 152 to 156 and 161 to 165; these read KHKGR and KKDVR. An N-linked (GlcNAc...) asparagine glycan is attached at N222. A disulfide bond links C235 and C288. N-linked (GlcNAc...) asparagine glycans are attached at residues N316, N348, N434, N460, and N489. C330 and C396 are oxidised to a cystine. An intrachain disulfide couples C437 to C490. Fibronectin type-III domains are found at residues 510-609 and 611-706; these read TPSS…TQPV and EPSA…SAQP. Residues 722-739 form a helical membrane-spanning segment; sequence GAIVGILIVIFVLLLVVM. Topologically, residues 740–858 are cytoplasmic; it reads DITCYFLNKC…TQTKENESKA (119 aa). Residues 765–858 form a disordered region; that stretch reads PGAKGKDMEE…TQTKENESKA (94 aa). Basic and acidic residues-rich tracts occupy residues 768 to 809 and 817 to 834; these read KGKD…HTEP and EPEKGPVETKSEPQESEA. A phosphoserine mark is found at S780 and S784.

As to quaternary structure, interacts with MDK. Found in a complex with SLC39A6, SLC39A10 and with NCAM1; this complex controls NCAM1 phosphorylation and integration into focal adhesion complexes during epithelial-tomesenchymal transition. Interacts with synaptic plasticity regulator PANTS. In terms of processing, polysialylated by ST8SIA2 and ST8SIA4. Polysialylation modulates cell interactions by confering both attractive and repulsive properties that are highly regulated by ST8SIA2 and ST8SIA4. Polysialylation is formed on a-2,3-linked sialic acid of core glycans.

It localises to the cell membrane. This protein is a cell adhesion molecule involved in neuron-neuron adhesion, neurite fasciculation, outgrowth of neurites, etc. This Rattus norvegicus (Rat) protein is Neural cell adhesion molecule 1.